The following is a 351-amino-acid chain: Glycerol-3-phosphate dehydrogenase 1-like protein (351 aa).

Residue 11–16 (GSGNWG) coordinates NAD(+). Lys-121 is a substrate binding site. An NAD(+)-binding site is contributed by Ala-154. Lys-205 acts as the Proton acceptor in catalysis. Residues Arg-271, Lys-298, and Gln-300 each contribute to the NAD(+) site. A substrate-binding site is contributed by 271–272 (RN).

Belongs to the NAD-dependent glycerol-3-phosphate dehydrogenase family.

It localises to the cytoplasm. It catalyses the reaction sn-glycerol 3-phosphate + NAD(+) = dihydroxyacetone phosphate + NADH + H(+). In terms of biological role, plays a role in regulating cardiac sodium current. This Danio rerio (Zebrafish) protein is Glycerol-3-phosphate dehydrogenase 1-like protein (gpd1l).